Here is a 214-residue protein sequence, read N- to C-terminus: Cytochrome b (214 aa).

The next 4 helical transmembrane spans lie at 31–51 (FGSMLLACLMTQIITGFFLAI), 75–96 (WIMQNTHAISASLFFICIYIHI), 111–131 (WLSGTTLLIILMATAFFGYVL), and 176–196 (FFALHFIFPFIIISMSSIHIL). Residues His81 and His95 each coordinate heme b. Heme b-binding residues include His180 and His194. His199 contacts a ubiquinone.

Belongs to the cytochrome b family. As to quaternary structure, the cytochrome bc1 complex contains 3 respiratory subunits (MT-CYB, CYC1 and UQCRFS1), 2 core proteins (UQCRC1 and UQCRC2) and probably 6 low-molecular weight proteins. It depends on heme b as a cofactor.

The protein resides in the mitochondrion inner membrane. Component of the ubiquinol-cytochrome c reductase complex (complex III or cytochrome b-c1 complex) that is part of the mitochondrial respiratory chain. The b-c1 complex mediates electron transfer from ubiquinol to cytochrome c. Contributes to the generation of a proton gradient across the mitochondrial membrane that is then used for ATP synthesis. This chain is Cytochrome b (MT-CYB), found in Bothrops bilineatus (Green jararaca).